Consider the following 498-residue polypeptide: L-amino acid oxidase Bs29 (498 aa).

An N-terminal signal peptide occupies residues 1–3; it reads SCA. Residues Cys-12 and Cys-175 are joined by a disulfide bond. FAD-binding positions include 45 to 46, 65 to 66, Arg-73, and 89 to 92; these read MS, EA, and GPMR. Residue Arg-92 participates in substrate binding. A glycan (N-linked (GlcNAc...) asparagine) is linked at Asn-174. Residue His-225 coordinates substrate. Val-263 contacts FAD. Residues Cys-333 and Cys-414 are joined by a disulfide bond. Tyr-374 lines the substrate pocket. FAD-binding positions include Glu-459 and 466–471; that span reads GWIDST. Position 466–467 (466–467) interacts with substrate; the sequence is GW.

It belongs to the flavin monoamine oxidase family. FIG1 subfamily. As to quaternary structure, monomer. This is in contrast with most of its orthologs, that are non-covalently linked homodimers. Requires FAD as cofactor. In terms of tissue distribution, expressed by the venom gland.

It is found in the secreted. It catalyses the reaction an L-alpha-amino acid + O2 + H2O = a 2-oxocarboxylate + H2O2 + NH4(+). The enzyme catalyses L-leucine + O2 + H2O = 4-methyl-2-oxopentanoate + H2O2 + NH4(+). Functionally, catalyzes an oxidative deamination of predominantly hydrophobic and aromatic L-amino acids, thus producing hydrogen peroxide that may contribute to the diverse toxic effects of this enzyme. Shows activity on L-Leu. Damage cell membranes of the Gram-positive bacteria S.aureus (MIC=4 ug/ml and MBC=8 ug/ml) and the Gram-negative bacteria A.baumanni (MIC=2 ug/ml and MBC=4 ug/ml). This antibacterial activity is dependent on the production of hydrogen peroxyde, since it is inhibited by catalase, a hydrogen peroxyde scavenger. The protein is L-amino acid oxidase Bs29 of Bothriechis schlegelii (Eyelash palm pitviper).